A 35-amino-acid chain; its full sequence is Photosystem II reaction center protein T (35 aa).

The helical transmembrane segment at 3-23 (ALVYTFLLVGTLGIIFFAIFF) threads the bilayer.

This sequence belongs to the PsbT family. In terms of assembly, PSII is composed of 1 copy each of membrane proteins PsbA, PsbB, PsbC, PsbD, PsbE, PsbF, PsbH, PsbI, PsbJ, PsbK, PsbL, PsbM, PsbT, PsbY, PsbZ, Psb30/Ycf12, at least 3 peripheral proteins of the oxygen-evolving complex and a large number of cofactors. It forms dimeric complexes.

The protein localises to the plastid. The protein resides in the chloroplast thylakoid membrane. Its function is as follows. Found at the monomer-monomer interface of the photosystem II (PS II) dimer, plays a role in assembly and dimerization of PSII. PSII is a light-driven water plastoquinone oxidoreductase, using light energy to abstract electrons from H(2)O, generating a proton gradient subsequently used for ATP formation. The chain is Photosystem II reaction center protein T from Chaetosphaeridium globosum (Charophycean green alga).